The following is a 517-amino-acid chain: Splicing factor cactin (517 aa).

Basic and acidic residues predominate over residues 1–14 (MAFRDSTRDFNRSR). The disordered stretch occupies residues 1–59 (MAFRDSTRDFNRSRPEKRHASRSSSPRSFRPSNQNARANYNLPRVRDAMKEEERSRETK). Low complexity predominate over residues 22-32 (RSSSPRSFRPS). Residues 44–59 (RVRDAMKEEERSRETK) are compositionally biased toward basic and acidic residues.

The protein belongs to the CACTIN family. In terms of assembly, interacts with sde2. Interacts with cdc5.

Its function is as follows. Plays a role in pre-mRNA splicing by facilitating excision of introns featuring long spacing between the branchpoint and 3'-splice site (ss). Recruited to the spliceosome by sde2, which may enable folding of the RNA between the BP and 3'-ss to guide the splice site towards the spliceosome's catalytic center. Assists the splicing of several components involved in chromatin organization. The protein is Splicing factor cactin of Schizosaccharomyces pombe (strain 972 / ATCC 24843) (Fission yeast).